Reading from the N-terminus, the 377-residue chain is Succinyl-diaminopimelate desuccinylase (377 aa).

Zn(2+) is bound at residue His75. The active site involves Asp77. Asp106 serves as a coordination point for Zn(2+). Residue Glu136 is the Proton acceptor of the active site. The Zn(2+) site is built by Glu137, Glu165, and His350.

It belongs to the peptidase M20A family. DapE subfamily. Homodimer. Zn(2+) serves as cofactor. The cofactor is Co(2+).

It catalyses the reaction N-succinyl-(2S,6S)-2,6-diaminopimelate + H2O = (2S,6S)-2,6-diaminopimelate + succinate. Its pathway is amino-acid biosynthesis; L-lysine biosynthesis via DAP pathway; LL-2,6-diaminopimelate from (S)-tetrahydrodipicolinate (succinylase route): step 3/3. In terms of biological role, catalyzes the hydrolysis of N-succinyl-L,L-diaminopimelic acid (SDAP), forming succinate and LL-2,6-diaminopimelate (DAP), an intermediate involved in the bacterial biosynthesis of lysine and meso-diaminopimelic acid, an essential component of bacterial cell walls. This chain is Succinyl-diaminopimelate desuccinylase, found in Sphingopyxis alaskensis (strain DSM 13593 / LMG 18877 / RB2256) (Sphingomonas alaskensis).